A 303-amino-acid chain; its full sequence is MYYGFDVGGTKIEFGAFNEKLERVATERIPTQTENYSLLVDDIASLIAKYDAEFGVEGKVGLGIPGMEDAETGALLTSNVPAAKGQFLRKDLEAKIGRSVKIDNDANCFALSEAWDEELKDSPSVMGLILGTGFGGGLIFDGKAFSGYSHVAGELGHSRLPIDAWFHLGENAPLLECGCGNKGCIDNYLSGRGFELLYAHYYGEQKKAIDIIKAHAEGDANAVEHVDRFMELLAICFANLFTCFDPHVVALGGGLSNFELIYEELPKRLPKHLLSVGRVPRIIKAKHGDSGGVRGAAFLNIKD.

ATP contacts are provided by residues glycine 4 to lysine 11 and glycine 133 to phenylalanine 140. The Zn(2+) site is built by histidine 157, cysteine 177, cysteine 179, and cysteine 184.

It belongs to the ROK (NagC/XylR) family. NagK subfamily.

It carries out the reaction N-acetyl-D-glucosamine + ATP = N-acetyl-D-glucosamine 6-phosphate + ADP + H(+). It functions in the pathway cell wall biogenesis; peptidoglycan recycling. Its function is as follows. Catalyzes the phosphorylation of N-acetyl-D-glucosamine (GlcNAc) derived from cell-wall degradation, yielding GlcNAc-6-P. The protein is N-acetyl-D-glucosamine kinase of Aliivibrio fischeri (strain ATCC 700601 / ES114) (Vibrio fischeri).